The primary structure comprises 487 residues: Glutamate--tRNA ligase 2 (487 aa).

A 'HIGH' region motif is present at residues 24–34; it reads PSPTGFLHIGG. The 'KMSKS' region signature appears at 258–262; sequence KLSKR. Lys261 is a binding site for ATP.

The protein belongs to the class-I aminoacyl-tRNA synthetase family. Glutamate--tRNA ligase type 1 subfamily. As to quaternary structure, monomer.

The protein resides in the cytoplasm. It carries out the reaction tRNA(Glu) + L-glutamate + ATP = L-glutamyl-tRNA(Glu) + AMP + diphosphate. Catalyzes the attachment of glutamate to tRNA(Glu) in a two-step reaction: glutamate is first activated by ATP to form Glu-AMP and then transferred to the acceptor end of tRNA(Glu). This is Glutamate--tRNA ligase 2 from Novosphingobium aromaticivorans (strain ATCC 700278 / DSM 12444 / CCUG 56034 / CIP 105152 / NBRC 16084 / F199).